We begin with the raw amino-acid sequence, 290 residues long: TIP41-like protein (290 aa).

It belongs to the TIP41 family. Interacts with TAP46. Widely expressed.

In terms of biological role, may be involved in the regulation of the TOR signaling pathway. Indirectly activates the PP2A phosphatase via interaction with its suppressor TAP46. Could play a role in cytoskeleton functions. This Arabidopsis thaliana (Mouse-ear cress) protein is TIP41-like protein.